A 397-amino-acid polypeptide reads, in one-letter code: Beta-lactamase (397 aa).

Residues 1–26 form the signal peptide; that stretch reads MRDTRFPCLCGIAASTLLFATTPAIA. Serine 90 serves as the catalytic Acyl-ester intermediate. Residues serine 90, glutamine 146, tyrosine 177, asparagine 179, and asparagine 370 each coordinate a beta-lactam. Tyrosine 177 serves as the catalytic Proton acceptor.

It belongs to the class-C beta-lactamase family. Monomer.

The protein resides in the periplasm. It carries out the reaction a beta-lactam + H2O = a substituted beta-amino acid. Class C beta-lactamase which confers resistance to penicillins and cephalosporins. Has nitrocefin-hydrolyzing activity. This is Beta-lactamase (ampC) from Pseudomonas aeruginosa (strain ATCC 15692 / DSM 22644 / CIP 104116 / JCM 14847 / LMG 12228 / 1C / PRS 101 / PAO1).